The sequence spans 319 residues: Transcription factor jun-1 (319 aa).

Disordered regions lie at residues 1–52 (MEED…EKES) and 216–264 (NGVN…CRQK). Residues 8 to 19 (PPSSSTSSESPE) are compositionally biased toward low complexity. The segment covering 28–38 (PTRRRKNSKKD) has biased composition (basic residues). The tract at residues 244-285 (KKKLERKRARNRQAATKCRQKKMDRIKELEEQVLHEKHRGQR) is basic motif. The 64-residue stretch at 244–307 (KKKLERKRAR…EHFRRTVEHH (64 aa)) folds into the bZIP domain. The interval 286–293 (LDAELLEL) is leucine-zipper.

It belongs to the bZIP family. Jun subfamily. In terms of assembly, heterodimer; with fos-1. In terms of tissue distribution, isoform a, isoform b, isoform c and isoform d are expressed in the spermatheca.

It localises to the nucleus. Transcription factor that recognizes and binds to the AP-1 non-canonical enhancer heptamer motif 5'-TTAGTCA-3'. Required for ovulation. Controls plc-1 expression in the spermatheca to regulate spermathecal valve dilation. The protein is Transcription factor jun-1 of Caenorhabditis elegans.